Consider the following 896-residue polypeptide: Alanine--tRNA ligase (896 aa).

Positions 574, 578, 677, and 681 each coordinate Zn(2+).

Belongs to the class-II aminoacyl-tRNA synthetase family. It depends on Zn(2+) as a cofactor.

The protein localises to the cytoplasm. The catalysed reaction is tRNA(Ala) + L-alanine + ATP = L-alanyl-tRNA(Ala) + AMP + diphosphate. Its function is as follows. Catalyzes the attachment of alanine to tRNA(Ala) in a two-step reaction: alanine is first activated by ATP to form Ala-AMP and then transferred to the acceptor end of tRNA(Ala). Also edits incorrectly charged Ser-tRNA(Ala) and Gly-tRNA(Ala) via its editing domain. This is Alanine--tRNA ligase from Mycoplasma mycoides subsp. mycoides SC (strain CCUG 32753 / NCTC 10114 / PG1).